Consider the following 485-residue polypeptide: NADH-quinone oxidoreductase subunit N (485 aa).

14 helical membrane passes run 8 to 28 (LIAL…MLSI), 35 to 55 (FINT…LYFV), 75 to 95 (LYIG…YSWL), 104 to 124 (EFYL…CANH), 125 to 145 (LASL…LIGY), 159 to 179 (YMLL…LLYA), 203 to 223 (ILSG…LVPF), 235 to 255 (PAPV…AVVI), 271 to 291 (TVLT…ALTQ), 297 to 317 (LLGY…VAVQ), 326 to 346 (VGIY…VVSL), 383 to 403 (LAGI…VLGV), 406 to 426 (ELWW…YYYL), and 455 to 475 (MVVL…QPLI).

Belongs to the complex I subunit 2 family. NDH-1 is composed of 13 different subunits. Subunits NuoA, H, J, K, L, M, N constitute the membrane sector of the complex.

Its subcellular location is the cell inner membrane. It catalyses the reaction a quinone + NADH + 5 H(+)(in) = a quinol + NAD(+) + 4 H(+)(out). Functionally, NDH-1 shuttles electrons from NADH, via FMN and iron-sulfur (Fe-S) centers, to quinones in the respiratory chain. The immediate electron acceptor for the enzyme in this species is believed to be ubiquinone. Couples the redox reaction to proton translocation (for every two electrons transferred, four hydrogen ions are translocated across the cytoplasmic membrane), and thus conserves the redox energy in a proton gradient. This is NADH-quinone oxidoreductase subunit N from Photorhabdus laumondii subsp. laumondii (strain DSM 15139 / CIP 105565 / TT01) (Photorhabdus luminescens subsp. laumondii).